The following is a 261-amino-acid chain: Proteasome assembly chaperone 2 (261 aa).

Belongs to the PSMG2 family. As to quaternary structure, forms a heterodimer with psmg1. Post-translationally, degraded by the proteasome upon completion of 20S proteasome maturation.

The protein resides in the nucleus. In terms of biological role, chaperone protein which promotes assembly of the 20S proteasome as part of a heterodimer with psmg1. In Xenopus tropicalis (Western clawed frog), this protein is Proteasome assembly chaperone 2.